A 180-amino-acid polypeptide reads, in one-letter code: Adenine phosphoribosyltransferase (180 aa).

Residue Ser-2 is modified to N-acetylserine. Phosphoserine occurs at positions 15 and 30. Phosphotyrosine is present on Tyr-60. A Phosphoserine modification is found at Ser-66. The residue at position 114 (Lys-114) is an N6-acetyllysine. Thr-135 carries the post-translational modification Phosphothreonine.

Belongs to the purine/pyrimidine phosphoribosyltransferase family. As to quaternary structure, homodimer.

It is found in the cytoplasm. The catalysed reaction is AMP + diphosphate = 5-phospho-alpha-D-ribose 1-diphosphate + adenine. The protein operates within purine metabolism; AMP biosynthesis via salvage pathway; AMP from adenine: step 1/1. Its function is as follows. Catalyzes a salvage reaction resulting in the formation of AMP, that is energically less costly than de novo synthesis. The protein is Adenine phosphoribosyltransferase of Stochomys longicaudatus (Target rat).